The sequence spans 181 residues: Large ribosomal subunit protein uL5 (181 aa).

Belongs to the universal ribosomal protein uL5 family. In terms of assembly, part of the 50S ribosomal subunit; part of the 5S rRNA/L5/L18/L25 subcomplex. Contacts the 5S rRNA and the P site tRNA. Forms a bridge to the 30S subunit in the 70S ribosome.

This is one of the proteins that bind and probably mediate the attachment of the 5S RNA into the large ribosomal subunit, where it forms part of the central protuberance. In the 70S ribosome it contacts protein S13 of the 30S subunit (bridge B1b), connecting the 2 subunits; this bridge is implicated in subunit movement. Contacts the P site tRNA; the 5S rRNA and some of its associated proteins might help stabilize positioning of ribosome-bound tRNAs. This chain is Large ribosomal subunit protein uL5, found in Rickettsia canadensis (strain McKiel).